The sequence spans 142 residues: Hemoglobin subunit zeta (142 aa).

N-acetylserine is present on Ser-2. Positions 2–142 constitute a Globin domain; the sequence is SLTKTEGTII…VSSVLTEKYR (141 aa). A Phosphothreonine modification is found at Thr-29. Position 53 is a phosphoserine (Ser-53). Residue His-59 participates in heme b binding. Residues Ser-73 and Ser-82 each carry the phosphoserine modification. Heme b is bound at residue His-88.

Belongs to the globin family. In terms of assembly, heterotetramer of two zeta chains and beta-type chains.

Its function is as follows. The zeta chain is an alpha-type chain of mammalian embryonic hemoglobin. This chain is Hemoglobin subunit zeta (HBZ1), found in Pan troglodytes (Chimpanzee).